A 359-amino-acid chain; its full sequence is 3-dehydroquinate synthase (359 aa).

NAD(+) is bound by residues 71 to 76 (DGEAHK), 105 to 109 (GVIGD), 129 to 130 (TT), Lys-142, Lys-151, and 169 to 172 (TLHT). Glu-184, His-247, and His-264 together coordinate Zn(2+).

Belongs to the sugar phosphate cyclases superfamily. Dehydroquinate synthase family. Co(2+) serves as cofactor. Zn(2+) is required as a cofactor. It depends on NAD(+) as a cofactor.

The protein resides in the cytoplasm. It carries out the reaction 7-phospho-2-dehydro-3-deoxy-D-arabino-heptonate = 3-dehydroquinate + phosphate. It functions in the pathway metabolic intermediate biosynthesis; chorismate biosynthesis; chorismate from D-erythrose 4-phosphate and phosphoenolpyruvate: step 2/7. In terms of biological role, catalyzes the conversion of 3-deoxy-D-arabino-heptulosonate 7-phosphate (DAHP) to dehydroquinate (DHQ). This chain is 3-dehydroquinate synthase, found in Neisseria gonorrhoeae (strain ATCC 700825 / FA 1090).